The following is a 374-amino-acid chain: Serpin B8 (374 aa).

Belongs to the serpin family. Ov-serpin subfamily.

It localises to the cytoplasm. Has an important role in epithelial desmosome-mediated cell-cell adhesion. The chain is Serpin B8 (SERPINB8) from Homo sapiens (Human).